Here is a 313-residue protein sequence, read N- to C-terminus: tRNA dimethylallyltransferase (313 aa).

11–18 (GPTAGGKT) contacts ATP. 13-18 (TAGGKT) is a binding site for substrate. 3 interaction with substrate tRNA regions span residues 36–39 (DSAL), 160–164 (QRIGR), and 243–248 (RCVGYR).

The protein belongs to the IPP transferase family. In terms of assembly, monomer. It depends on Mg(2+) as a cofactor.

The enzyme catalyses adenosine(37) in tRNA + dimethylallyl diphosphate = N(6)-dimethylallyladenosine(37) in tRNA + diphosphate. In terms of biological role, catalyzes the transfer of a dimethylallyl group onto the adenine at position 37 in tRNAs that read codons beginning with uridine, leading to the formation of N6-(dimethylallyl)adenosine (i(6)A). The polypeptide is tRNA dimethylallyltransferase (Neisseria meningitidis serogroup A / serotype 4A (strain DSM 15465 / Z2491)).